We begin with the raw amino-acid sequence, 119 residues long: Large ribosomal subunit protein uL18 (119 aa).

Belongs to the universal ribosomal protein uL18 family. As to quaternary structure, part of the 50S ribosomal subunit; part of the 5S rRNA/L5/L18/L25 subcomplex. Contacts the 5S and 23S rRNAs.

In terms of biological role, this is one of the proteins that bind and probably mediate the attachment of the 5S RNA into the large ribosomal subunit, where it forms part of the central protuberance. The sequence is that of Large ribosomal subunit protein uL18 from Cupriavidus metallidurans (strain ATCC 43123 / DSM 2839 / NBRC 102507 / CH34) (Ralstonia metallidurans).